The following is a 594-amino-acid chain: Glutamate decarboxylase 1 (594 aa).

Residues 1 to 13 (MASSTPSSSATSS) show a composition bias toward low complexity. Positions 1 to 23 (MASSTPSSSATSSNAGADPNTTN) are disordered. Ser-78 carries the phosphoserine modification. Residue 190–192 (QLS) participates in 4-aminobutanoate binding. Lys-405 carries the N6-(pyridoxal phosphate)lysine modification. Arg-567 is a 4-aminobutanoate binding site.

It belongs to the group II decarboxylase family. In terms of assembly, homodimer. Pyridoxal 5'-phosphate is required as a cofactor.

It carries out the reaction L-glutamate + H(+) = 4-aminobutanoate + CO2. Functionally, catalyzes the synthesis of the inhibitory neurotransmitter gamma-aminobutyric acid (GABA) with pyridoxal 5'-phosphate as cofactor. In Felis catus (Cat), this protein is Glutamate decarboxylase 1 (GAD1).